The sequence spans 152 residues: Lipoprotein signal peptidase (152 aa).

A run of 2 helical transmembrane segments spans residues 55 to 75 (NKMWFFYIITVIFVAFIVFYM) and 85 to 105 (LGISLGLILGGAIGNFIDRVF). Residues Asp111 and Asp129 contribute to the active site. A helical membrane pass occupies residues 124–144 (VFNIADSALCIGVVLIIIQTV).

This sequence belongs to the peptidase A8 family.

It localises to the cell membrane. The enzyme catalyses Release of signal peptides from bacterial membrane prolipoproteins. Hydrolyzes -Xaa-Yaa-Zaa-|-(S,diacylglyceryl)Cys-, in which Xaa is hydrophobic (preferably Leu), and Yaa (Ala or Ser) and Zaa (Gly or Ala) have small, neutral side chains.. The protein operates within protein modification; lipoprotein biosynthesis (signal peptide cleavage). Its function is as follows. This protein specifically catalyzes the removal of signal peptides from prolipoproteins. The polypeptide is Lipoprotein signal peptidase (Bacillus mycoides (strain KBAB4) (Bacillus weihenstephanensis)).